The primary structure comprises 378 residues: Protein KlaB (378 aa).

This sequence belongs to the TelA family.

In terms of biological role, belongs to the kla operon, which is associated with cryptic tellurite resistance, and IncW plasmid fertility inhibition. The chain is Protein KlaB (klaB) from Escherichia coli.